Here is a 243-residue protein sequence, read N- to C-terminus: Juxtaposed with another zinc finger protein 1 (243 aa).

The segment at 12–37 (NTCRFGGCGLHFPTLADLIEHIEDNH) adopts a C2H2-type 1 zinc-finger fold. A required for interaction with NR2C2 region spans residues 39–79 (DTDPRVLEKQELQQPTYVALSYINRFMTDAARREQESLKKK). Residues 89 to 108 (SSSVSRGNVSTPPRHSSGSL) are compositionally biased toward polar residues. The segment at 89 to 151 (SSSVSRGNVS…SDSDESWTTE (63 aa)) is disordered. Phosphothreonine occurs at positions 109 and 113. Low complexity predominate over residues 118 to 130 (PSSSFRSSTPTGS). Acidic residues predominate over residues 131-148 (EYDEEEVDYEESDSDESW). The C2H2-type 2 zinc-finger motif lies at 173-198 (FACPVPGCKKRYKNVNGIKYHAKNGH). Residues 208 to 230 (FKCRCGKSYKTAQGLRHHTINFH) form a C2H2-type 3; degenerate zinc finger.

Interacts with NR2C2 (via ligand-binding region). As to expression, expressed in range of tissues with highest expression levels in testis, liver, muscle and fat and lowest levels in kidney. Detected in liver and white adipose tissue (at protein level).

It localises to the nucleus. Its function is as follows. Acts as a transcriptional corepressor of orphan nuclear receptor NR2C2. Inhibits expression of the gluconeogenesis enzyme PCK2 through inhibition of NR2C2 activity. Also involved in transcriptional activation of NAMPT by promoting expression of PPARA and PPARD. Plays a role in lipid metabolism by suppressing lipogenesis, increasing lipolysis and decreasing lipid accumulation in adipose tissue. Plays a role in glucose homeostasis by improving glucose metabolism and insulin sensitivity. The polypeptide is Juxtaposed with another zinc finger protein 1 (Jazf1) (Mus musculus (Mouse)).